The primary structure comprises 344 residues: Nuclear distribution protein nudE-like 1-B (344 aa).

Positions 26–189 form a coiled coil; the sequence is YKKSCHDAQE…ELAVRERTSD (164 aa).

It belongs to the nudE family. In terms of processing, phosphorylated in mitosis.

It localises to the cytoplasm. The protein resides in the cytoskeleton. It is found in the microtubule organizing center. Its subcellular location is the centrosome. The protein localises to the spindle. Required for organization of the cellular microtubule array and microtubule anchoring at the centrosome. Positively regulates the activity of the minus-end directed microtubule motor protein dynein. May enhance dynein-mediated microtubule sliding by targeting dynein to the microtubule plus end. The chain is Nuclear distribution protein nudE-like 1-B (ndel1b) from Danio rerio (Zebrafish).